The sequence spans 377 residues: D-alanine--D-alanine ligase (377 aa).

The region spanning 140–349 is the ATP-grasp domain; it reads KELLTVNGIR…NAKLVDMLID (210 aa). 170 to 225 serves as a coordination point for ATP; it reads VAELGNIVFVKAANQGSSVGISRVTNAEEYTEALSDSFQYDYKVLIEEAVNGAREL. Mg(2+)-binding residues include Asp303, Glu316, and Asn318.

It belongs to the D-alanine--D-alanine ligase family. It depends on Mg(2+) as a cofactor. Requires Mn(2+) as cofactor.

The protein resides in the cytoplasm. The enzyme catalyses 2 D-alanine + ATP = D-alanyl-D-alanine + ADP + phosphate + H(+). It functions in the pathway cell wall biogenesis; peptidoglycan biosynthesis. Cell wall formation. The polypeptide is D-alanine--D-alanine ligase (Leuconostoc mesenteroides subsp. mesenteroides (strain ATCC 8293 / DSM 20343 / BCRC 11652 / CCM 1803 / JCM 6124 / NCDO 523 / NBRC 100496 / NCIMB 8023 / NCTC 12954 / NRRL B-1118 / 37Y)).